Consider the following 499-residue polypeptide: Lysine--tRNA ligase (499 aa).

Positions 408 and 415 each coordinate Mg(2+).

The protein belongs to the class-II aminoacyl-tRNA synthetase family. As to quaternary structure, homodimer. Mg(2+) is required as a cofactor.

It is found in the cytoplasm. It catalyses the reaction tRNA(Lys) + L-lysine + ATP = L-lysyl-tRNA(Lys) + AMP + diphosphate. The sequence is that of Lysine--tRNA ligase from Thermoanaerobacter sp. (strain X514).